The following is a 503-amino-acid chain: Lysine--tRNA ligase (503 aa).

Mg(2+) is bound by residues E410 and E417.

The protein belongs to the class-II aminoacyl-tRNA synthetase family. In terms of assembly, homodimer. Mg(2+) is required as a cofactor.

Its subcellular location is the cytoplasm. The catalysed reaction is tRNA(Lys) + L-lysine + ATP = L-lysyl-tRNA(Lys) + AMP + diphosphate. The polypeptide is Lysine--tRNA ligase (Prochlorococcus marinus (strain MIT 9211)).